Consider the following 174-residue polypeptide: MTQPPNRQPVRILGIDPGLRRTGWGVIESEGNRLVFIGCGSVEPPDTLPLAERLLAIHRGLAKVLADFAPDEAAVEQTFVNKDAGATLKLGQARGVAMLAPAMVGLSVAEYAPNLVKKTVVGAGHADKNQIQMMLKILLPKAEPPSADAADALAVAITHAHHRVAAARLKAVGA.

Active-site residues include D16, E76, and D148. Mg(2+)-binding residues include D16, E76, and D148.

It belongs to the RuvC family. In terms of assembly, homodimer which binds Holliday junction (HJ) DNA. The HJ becomes 2-fold symmetrical on binding to RuvC with unstacked arms; it has a different conformation from HJ DNA in complex with RuvA. In the full resolvosome a probable DNA-RuvA(4)-RuvB(12)-RuvC(2) complex forms which resolves the HJ. The cofactor is Mg(2+).

It is found in the cytoplasm. It carries out the reaction Endonucleolytic cleavage at a junction such as a reciprocal single-stranded crossover between two homologous DNA duplexes (Holliday junction).. Its function is as follows. The RuvA-RuvB-RuvC complex processes Holliday junction (HJ) DNA during genetic recombination and DNA repair. Endonuclease that resolves HJ intermediates. Cleaves cruciform DNA by making single-stranded nicks across the HJ at symmetrical positions within the homologous arms, yielding a 5'-phosphate and a 3'-hydroxyl group; requires a central core of homology in the junction. The consensus cleavage sequence is 5'-(A/T)TT(C/G)-3'. Cleavage occurs on the 3'-side of the TT dinucleotide at the point of strand exchange. HJ branch migration catalyzed by RuvA-RuvB allows RuvC to scan DNA until it finds its consensus sequence, where it cleaves and resolves the cruciform DNA. This is Crossover junction endodeoxyribonuclease RuvC from Rhodopseudomonas palustris (strain BisA53).